The following is an 852-amino-acid chain: Replication factor C small subunit (852 aa).

Residues 183-306 (WLGYFMGSGY…IAYALASFGI (124 aa)) form the DOD-type homing endonuclease domain.

Belongs to the activator 1 small subunits family. RfcS subfamily. As to quaternary structure, heteromultimer composed of three to four small subunits (RfcS) and one to two large subunits (RfcL). In terms of processing, this protein undergoes a protein self splicing that involves a post-translational excision of the intervening region (intein) followed by peptide ligation.

Functionally, part of the RFC clamp loader complex which loads the PCNA sliding clamp onto DNA. The complex possesses DNA-dependent ATPase activity which is further stimulated by PCNA. This Pyrococcus furiosus (strain ATCC 43587 / DSM 3638 / JCM 8422 / Vc1) protein is Replication factor C small subunit (rfcS).